Consider the following 340-residue polypeptide: Phosphoribosylformylglycinamidine cyclo-ligase (340 aa).

It belongs to the AIR synthase family.

The protein resides in the cytoplasm. It catalyses the reaction 2-formamido-N(1)-(5-O-phospho-beta-D-ribosyl)acetamidine + ATP = 5-amino-1-(5-phospho-beta-D-ribosyl)imidazole + ADP + phosphate + H(+). Its pathway is purine metabolism; IMP biosynthesis via de novo pathway; 5-amino-1-(5-phospho-D-ribosyl)imidazole from N(2)-formyl-N(1)-(5-phospho-D-ribosyl)glycinamide: step 2/2. This chain is Phosphoribosylformylglycinamidine cyclo-ligase, found in Streptococcus agalactiae serotype III (strain NEM316).